Here is a 339-residue protein sequence, read N- to C-terminus: uncharacterized protein (339 aa).

The disordered stretch occupies residues 1-24 (IQPARRHTKNTNMAKHTTKGTGHS). The segment covering 10–21 (NTNMAKHTTKGT) has biased composition (polar residues).

The protein resides in the mitochondrion. This is an uncharacterized protein from Zea mays (Maize).